A 161-amino-acid polypeptide reads, in one-letter code: MLEPEFWVAVAFVIFCGIVWKAGGFDQIINGLDRRGERVRRELEEARRLREEAAALLADYQKRRGEAEREAEAIVANARAEAERAAAEGHARLNDFVARRTKAAEAKIAQAEAQAAAEVRAAAAEAAVRVSETILREKVTGDAAQDLIRRSLGDIRTRLRA.

The helical transmembrane segment at 5 to 25 (EFWVAVAFVIFCGIVWKAGGF) threads the bilayer.

Belongs to the ATPase B chain family. In terms of assembly, F-type ATPases have 2 components, F(1) - the catalytic core - and F(0) - the membrane proton channel. F(1) has five subunits: alpha(3), beta(3), gamma(1), delta(1), epsilon(1). F(0) has three main subunits: a(1), b(2) and c(10-14). The alpha and beta chains form an alternating ring which encloses part of the gamma chain. F(1) is attached to F(0) by a central stalk formed by the gamma and epsilon chains, while a peripheral stalk is formed by the delta and b chains.

It localises to the cell inner membrane. In terms of biological role, f(1)F(0) ATP synthase produces ATP from ADP in the presence of a proton or sodium gradient. F-type ATPases consist of two structural domains, F(1) containing the extramembraneous catalytic core and F(0) containing the membrane proton channel, linked together by a central stalk and a peripheral stalk. During catalysis, ATP synthesis in the catalytic domain of F(1) is coupled via a rotary mechanism of the central stalk subunits to proton translocation. Its function is as follows. Component of the F(0) channel, it forms part of the peripheral stalk, linking F(1) to F(0). The sequence is that of ATP synthase subunit b 1 from Methylobacterium sp. (strain 4-46).